Consider the following 290-residue polypeptide: Virginiamycin B lyase (290 aa).

His226 contributes to the substrate binding site. Glu265 contacts Mg(2+). His267 acts as the Proton acceptor in catalysis. Glu282 lines the Mg(2+) pocket.

The protein belongs to the Vgb family. In terms of assembly, monomer. Requires Mg(2+) as cofactor.

In terms of biological role, inactivates the type B streptogramin antibiotics by linearizing the lactone ring at the ester linkage, generating a free phenylglycine carboxylate and converting the threonyl moiety into 2-amino-butenoic acid. In Mycolicibacterium vanbaalenii (strain DSM 7251 / JCM 13017 / BCRC 16820 / KCTC 9966 / NRRL B-24157 / PYR-1) (Mycobacterium vanbaalenii), this protein is Virginiamycin B lyase.